We begin with the raw amino-acid sequence, 632 residues long: PTS system mannitol-specific EIICBA component (632 aa).

The PTS EIIC type-2 domain occupies 12–341; that stretch reads FGRFLSNMIM…ILLKYDFNTI (330 aa). The next 6 helical transmembrane spans lie at 24-45, 50-70, 134-155, 165-185, 273-292, and 313-334; these read ISIF…WQPN, QLIS…TGGS, SLAI…PFIE, IQII…EPAK, LILG…GGLI, and FSNI…SILL. The 96-residue stretch at 374 to 469 folds into the PTS EIIB type-2 domain; it reads KTIIVACDAG…KLVENMVFLY (96 aa). The Phosphocysteine intermediate; for EIIB activity role is filled by Cys-380. Phosphocysteine; by EIIA is present on Cys-380. Residues 488–630 enclose the PTS EIIA type-2 domain; sequence FQLNEENIIL…KEALSLLTME (143 aa). His-548 (tele-phosphohistidine intermediate; for EIIA activity) is an active-site residue. His-548 is subject to Phosphohistidine; by HPr.

Homodimer. An intramolecular phosphotransfer takes places between His-548 and Cys-380.

Its subcellular location is the cell inner membrane. It carries out the reaction D-mannitol(out) + N(pros)-phospho-L-histidyl-[protein] = D-mannitol 1-phosphate(in) + L-histidyl-[protein]. The phosphoenolpyruvate-dependent sugar phosphotransferase system (sugar PTS), a major carbohydrate active transport system, catalyzes the phosphorylation of incoming sugar substrates concomitantly with their translocation across the cell membrane. This system is involved in D-mannitol transport. This chain is PTS system mannitol-specific EIICBA component (mtlA), found in Buchnera aphidicola subsp. Acyrthosiphon pisum (strain APS) (Acyrthosiphon pisum symbiotic bacterium).